Here is a 347-residue protein sequence, read N- to C-terminus: MNTPDPWSSPEVQFCFAAANSSCPRKARPALVVCAMYLIMIGAIVMTMLGNMAVIISIAHFKQLHSPTNFLILSMATTDFLLSCVVMPFSMIRSIESCWYFGDLFCKVHSCCDIMLCTTSIFHLCFISVDRHYAVCDPLHYVTQITTRVVGVFLLISWSVPIFFAFGLVFSELNLIGAEDFVAAIDCTGLCVLIFNKLWGVLASFIAFFLPGTVMVGIYIHIFTVAQKHARQIGTGPRTKQALSESKMKATSKKESKATKTLSIVMGVFVLCWLPFFVLTITDPFIDFTTPEDLYNVFLWLGYFNSTFNPIIYGMFYPWFRKALRMIVTGTIFRSDSSTSSLHPAHP.

The Extracellular portion of the chain corresponds to 1–37; that stretch reads MNTPDPWSSPEVQFCFAAANSSCPRKARPALVVCAMY. N20 carries N-linked (GlcNAc...) asparagine glycosylation. 2 disulfide bridges follow: C23/C187 and C106/C191. The helical transmembrane segment at 38–58 threads the bilayer; it reads LIMIGAIVMTMLGNMAVIISI. Residues 59–69 are Cytoplasmic-facing; the sequence is AHFKQLHSPTN. Residues 70–90 form a helical membrane-spanning segment; that stretch reads FLILSMATTDFLLSCVVMPFS. Residues 91 to 110 are Extracellular-facing; that stretch reads MIRSIESCWYFGDLFCKVHS. Residues 111–129 form a helical membrane-spanning segment; that stretch reads CCDIMLCTTSIFHLCFISV. The Cytoplasmic segment spans residues 130–149; the sequence is DRHYAVCDPLHYVTQITTRV. The chain crosses the membrane as a helical span at residues 150–170; that stretch reads VGVFLLISWSVPIFFAFGLVF. Topologically, residues 171–197 are extracellular; sequence SELNLIGAEDFVAAIDCTGLCVLIFNK. The tract at residues 175–188 is extracellular Loop 2 (ECL2); it reads LIGAEDFVAAIDCT. The chain crosses the membrane as a helical span at residues 198 to 218; the sequence is LWGVLASFIAFFLPGTVMVGI. Over 219-260 the chain is Cytoplasmic; the sequence is YIHIFTVAQKHARQIGTGPRTKQALSESKMKATSKKESKATK. A helical transmembrane segment spans residues 261-281; it reads TLSIVMGVFVLCWLPFFVLTI. The Extracellular portion of the chain corresponds to 282-296; the sequence is TDPFIDFTTPEDLYN. The chain crosses the membrane as a helical span at residues 297 to 317; that stretch reads VFLWLGYFNSTFNPIIYGMFY. Residues 318 to 347 lie on the Cytoplasmic side of the membrane; the sequence is PWFRKALRMIVTGTIFRSDSSTSSLHPAHP.

This sequence belongs to the G-protein coupled receptor 1 family. In terms of tissue distribution, specifically expressed in neurons of the olfactory epithelium, to discrete glomeruli predominantly localized to a confined bulb region. Present in the dorsal area of the main olfactory epithelium.

The protein resides in the cell membrane. In terms of biological role, olfactory receptor specific for 2-phenylethylamine, a trace amine present at high concentration in the urine of carnivore species, playing a key role in fear and avoidance responses. 2-phenylethylamine acts as a kairomone in the chemical detection of carnivore odor and triggers fear in mice. This receptor is probably mediated by the G(s)-class of G-proteins which activate adenylate cyclase. The protein is Trace amine-associated receptor 4 of Mus musculus (Mouse).